Consider the following 1049-residue polypeptide: Presequence protease, mitochondrial (1049 aa).

The transit peptide at 1–39 (MLRSYLHLGRHRTPAFRQPLGRLLRPTASILQYAQSRTL) directs the protein to the mitochondrion. Residue H113 participates in Zn(2+) binding. The active-site Proton acceptor is the E116. Residue H117 participates in Zn(2+) binding. The active site involves E189. Residue E222 coordinates Zn(2+).

The protein belongs to the peptidase M16 family. PreP subfamily. As to quaternary structure, monomer and homodimer; homodimerization is induced by binding of the substrate. Zn(2+) serves as cofactor.

The protein localises to the mitochondrion intermembrane space. Its subcellular location is the mitochondrion matrix. Its function is as follows. Degrades mitochondrial transit peptides after their cleavage in the intermembrane space or in the matrix, and presequence peptides; clearance of these peptides is required to keep the presequence processing machinery running. Preferentially cleaves the N-terminal side of paired basic amino acid residues. Also degrades other unstructured peptides. May function as an ATP-dependent peptidase as opposed to a metalloendopeptidase. The polypeptide is Presequence protease, mitochondrial (cym1) (Emericella nidulans (strain FGSC A4 / ATCC 38163 / CBS 112.46 / NRRL 194 / M139) (Aspergillus nidulans)).